The primary structure comprises 356 residues: tRNA N6-adenosine threonylcarbamoyltransferase (356 aa).

3 residues coordinate a divalent metal cation: H122, H126, and Y143. Residues 143–147 (YVSGG), D175, G190, E194, and N287 each bind substrate. D315 contributes to the a divalent metal cation binding site.

This sequence belongs to the KAE1 / TsaD family. Component of the EKC/KEOPS complex composed of at least BUD32, CGI121, GON7, KAE1 and PCC1; the whole complex dimerizes. The cofactor is a divalent metal cation.

The protein localises to the cytoplasm. It is found in the nucleus. It catalyses the reaction L-threonylcarbamoyladenylate + adenosine(37) in tRNA = N(6)-L-threonylcarbamoyladenosine(37) in tRNA + AMP + H(+). In terms of biological role, component of the EKC/KEOPS complex that is required for the formation of a threonylcarbamoyl group on adenosine at position 37 (t(6)A37) in tRNAs that read codons beginning with adenine. The complex is probably involved in the transfer of the threonylcarbamoyl moiety of threonylcarbamoyl-AMP (TC-AMP) to the N6 group of A37. KAE1 likely plays a direct catalytic role in this reaction, but requires other protein(s) of the complex to fulfill this activity. The EKC/KEOPS complex also promotes both telomere uncapping and telomere elongation. The complex is required for efficient recruitment of transcriptional coactivators. In Chaetomium globosum (strain ATCC 6205 / CBS 148.51 / DSM 1962 / NBRC 6347 / NRRL 1970) (Soil fungus), this protein is tRNA N6-adenosine threonylcarbamoyltransferase.